Consider the following 103-residue polypeptide: Large ribosomal subunit protein eL14 (103 aa).

It belongs to the eukaryotic ribosomal protein eL14 family.

The polypeptide is Large ribosomal subunit protein eL14 (Pyrobaculum islandicum (strain DSM 4184 / JCM 9189 / GEO3)).